A 603-amino-acid polypeptide reads, in one-letter code: Penicillin-binding protein activator LpoA (603 aa).

An N-terminal signal peptide occupies residues 1–26 (MAMNHHQRRSVPRLLTPIALSIVLSA). Cysteine 27 carries N-palmitoyl cysteine lipidation. The S-diacylglycerol cysteine moiety is linked to residue cysteine 27.

The protein belongs to the LpoA family. As to quaternary structure, interacts with PBP1a.

Its subcellular location is the cell outer membrane. Functionally, regulator of peptidoglycan synthesis that is essential for the function of penicillin-binding protein 1A (PBP1a). This Vibrio cholerae serotype O1 (strain ATCC 39541 / Classical Ogawa 395 / O395) protein is Penicillin-binding protein activator LpoA.